The sequence spans 95 residues: RING finger protein Z (95 aa).

G2 is lipidated: N-myristoyl glycine; by host. The RING-type; atypical zinc finger occupies 38–74; that stretch reads CKSCWFANRGLIACSDHYLCLNCLTRLRSQSQFCGIC. The PTAP/PSAP motif signature appears at 88–91; the sequence is PSAP.

Belongs to the arenaviridae Z protein family. Interacts with protein NP; this interaction probably directs the encapsidated genome to budding sites. Interacts (via RING domain) with polymerase L; this interaction inhibits viral transcription and replication, Z partially blocks the product exit tunnel for the releasing nascent RNA product. Interacts with the glycoprotein complex; this interaction plays a role in virion budding. Interacts with host eIF4E; this interaction results in eIF4E reduced affinity for its substrate, the 5'-m7 G cap structure. Interacts (via late-budding domain) with host TSG101; this interaction is essential for budding and release of viral particles. Interacts with host RPLP0; this interaction may serve to load ribosome-like particles inside the virion. Interacts with host PML; this interaction induces PML bodies redistribution in the cytoplasm upon viral infection. In terms of processing, myristoylation is required for the role of RING finger protein Z in assembly and budding.

The protein resides in the virion. Its subcellular location is the host cytoplasm. It localises to the host perinuclear region. The protein localises to the host cell membrane. Functionally, plays a crucial role in virion assembly and budding. Expressed late in the virus life cycle, it acts as an inhibitor of viral transcription and RNA synthesis by interacting with the viral polymerase L. Presumably recruits the NP encapsidated genome to cellular membranes at budding sites via direct interaction with NP. Plays critical roles in the final steps of viral release by interacting with host TSG101, a member of the vacuolar protein-sorting pathway and using other cellular host proteins involved in vesicle formation pathway. The budding of the virus progeny occurs after association of protein Z with the viral glycoprotein complex SSP-GP1-GP2 at the cell periphery, step that requires myristoylation of protein Z. Also selectively represses protein production by associating with host eIF4E. In cell-based minigenome assay, has an inhibitory effect on the ribonucleoprotein machinery (vRNP), which is responsible for the replication and transcription of the viral genome. In Pirital mammarenavirus (isolate Rat/Venezuela/VAV-488/1995) (PIRV), this protein is RING finger protein Z.